The chain runs to 215 residues: UPF0126 membrane protein DR_2368 (215 aa).

Helical transmembrane passes span 15–35, 39–59, 75–95, 101–121, 123–143, and 162–182; these read LHWL…LLGV, FDLF…GAIR, TYLW…ERLA, LSLF…LGAI, IGLG…GGGI, and LYAT…PHFT.

The protein belongs to the UPF0126 family.

It localises to the cell membrane. This chain is UPF0126 membrane protein DR_2368, found in Deinococcus radiodurans (strain ATCC 13939 / DSM 20539 / JCM 16871 / CCUG 27074 / LMG 4051 / NBRC 15346 / NCIMB 9279 / VKM B-1422 / R1).